The sequence spans 234 residues: Large ribosomal subunit protein uL1 (234 aa).

Belongs to the universal ribosomal protein uL1 family. In terms of assembly, part of the 50S ribosomal subunit.

In terms of biological role, binds directly to 23S rRNA. The L1 stalk is quite mobile in the ribosome, and is involved in E site tRNA release. Functionally, protein L1 is also a translational repressor protein, it controls the translation of the L11 operon by binding to its mRNA. The sequence is that of Large ribosomal subunit protein uL1 from Aliivibrio salmonicida (strain LFI1238) (Vibrio salmonicida (strain LFI1238)).